A 140-amino-acid chain; its full sequence is ATP synthase epsilon chain (140 aa).

Belongs to the ATPase epsilon chain family. As to quaternary structure, F-type ATPases have 2 components, CF(1) - the catalytic core - and CF(0) - the membrane proton channel. CF(1) has five subunits: alpha(3), beta(3), gamma(1), delta(1), epsilon(1). CF(0) has three main subunits: a, b and c.

It localises to the cell inner membrane. Functionally, produces ATP from ADP in the presence of a proton gradient across the membrane. This Sodalis glossinidius (strain morsitans) protein is ATP synthase epsilon chain.